The following is a 388-amino-acid chain: Flap endonuclease 1 (388 aa).

The segment at 1 to 104 (MGILGLSKLI…GELAKRAERR (104 aa)) is N-domain. Aspartate 34 is a Mg(2+) binding site. DNA is bound by residues arginine 47 and arginine 70. 5 residues coordinate Mg(2+): aspartate 86, glutamate 158, glutamate 160, aspartate 179, and aspartate 181. The I-domain stretch occupies residues 122–253 (EIEKFNRRLV…KRAIELINSY (132 aa)). Glutamate 158 provides a ligand contact to DNA. Positions 231 and 233 each coordinate DNA. Aspartate 233 serves as a coordination point for Mg(2+). Positions 336 to 344 (TQVRLDSFF) are interaction with PCNA. The interval 355 to 388 (AAAKRKAEEAKKSANNKKAKIGGGGGAGRGRRPK) is disordered.

It belongs to the XPG/RAD2 endonuclease family. FEN1 subfamily. In terms of assembly, interacts with PCNA. Three molecules of FEN1 bind to one PCNA trimer with each molecule binding to one PCNA monomer. PCNA stimulates the nuclease activity without altering cleavage specificity. Mg(2+) is required as a cofactor. Phosphorylated. Phosphorylation upon DNA damage induces relocalization to the nuclear plasma.

Its subcellular location is the nucleus. The protein localises to the nucleolus. It localises to the nucleoplasm. It is found in the mitochondrion. Its function is as follows. Structure-specific nuclease with 5'-flap endonuclease and 5'-3' exonuclease activities involved in DNA replication and repair. During DNA replication, cleaves the 5'-overhanging flap structure that is generated by displacement synthesis when DNA polymerase encounters the 5'-end of a downstream Okazaki fragment. It enters the flap from the 5'-end and then tracks to cleave the flap base, leaving a nick for ligation. Also involved in the long patch base excision repair (LP-BER) pathway, by cleaving within the apurinic/apyrimidinic (AP) site-terminated flap. Acts as a genome stabilization factor that prevents flaps from equilibrating into structures that lead to duplications and deletions. Also possesses 5'-3' exonuclease activity on nicked or gapped double-stranded DNA, and exhibits RNase H activity. Also involved in replication and repair of rDNA and in repairing mitochondrial DNA. The polypeptide is Flap endonuclease 1 (Drosophila willistoni (Fruit fly)).